A 426-amino-acid polypeptide reads, in one-letter code: Putative 3-oxoacyl-[acyl-carrier-protein] synthase, mitochondrial (426 aa).

The N-terminal 18 residues, 1–18 (MKRVVITGLGAVTPLGNG), are a transit peptide targeting the mitochondrion. In terms of domain architecture, Ketosynthase family 3 (KS3) spans 19–423 (VKTNWRNLIQ…GTNASLCFKK (405 aa)). Catalysis depends on for beta-ketoacyl synthase activity residues Cys-170, His-311, and His-351.

The protein belongs to the thiolase-like superfamily. Beta-ketoacyl-ACP synthases family.

It localises to the mitochondrion. It catalyses the reaction a fatty acyl-[ACP] + malonyl-[ACP] + H(+) = a 3-oxoacyl-[ACP] + holo-[ACP] + CO2. The enzyme catalyses butanoyl-[ACP] + malonyl-[ACP] + H(+) = 3-oxohexanoyl-[ACP] + holo-[ACP] + CO2. It carries out the reaction hexanoyl-[ACP] + malonyl-[ACP] + H(+) = 3-oxooctanoyl-[ACP] + holo-[ACP] + CO2. The catalysed reaction is octanoyl-[ACP] + malonyl-[ACP] + H(+) = 3-oxodecanoyl-[ACP] + holo-[ACP] + CO2. It catalyses the reaction decanoyl-[ACP] + malonyl-[ACP] + H(+) = 3-oxododecanoyl-[ACP] + holo-[ACP] + CO2. The enzyme catalyses dodecanoyl-[ACP] + malonyl-[ACP] + H(+) = 3-oxotetradecanoyl-[ACP] + holo-[ACP] + CO2. It carries out the reaction tetradecanoyl-[ACP] + malonyl-[ACP] + H(+) = 3-oxohexadecanoyl-[ACP] + holo-[ACP] + CO2. It functions in the pathway lipid metabolism; fatty acid biosynthesis. Its function is as follows. May play a role in the biosynthesis of lipoic acid as well as longer chain fatty acids required for optimal mitochondrial function. In Schizosaccharomyces pombe (strain 972 / ATCC 24843) (Fission yeast), this protein is Putative 3-oxoacyl-[acyl-carrier-protein] synthase, mitochondrial.